The chain runs to 105 residues: MAAKIKKGDKVVILTGKDKGKKGDVVAVFPKENKALVQGVNMVKRHEKPSQTATGGIVTREAKVHLSNIAIQDPKTGAPTRVGFKTLDDGRKVRFAKASGETIDG.

Belongs to the universal ribosomal protein uL24 family. As to quaternary structure, part of the 50S ribosomal subunit.

One of two assembly initiator proteins, it binds directly to the 5'-end of the 23S rRNA, where it nucleates assembly of the 50S subunit. In terms of biological role, one of the proteins that surrounds the polypeptide exit tunnel on the outside of the subunit. The protein is Large ribosomal subunit protein uL24 of Parvibaculum lavamentivorans (strain DS-1 / DSM 13023 / NCIMB 13966).